The following is a 769-amino-acid chain: Glutathione biosynthesis bifunctional protein GshAB (769 aa).

Positions 1 to 347 are glutamate--cysteine ligase; the sequence is MLDSFKEDPN…QLADENENNI (347 aa). The 255-residue stretch at 514 to 768 folds into the ATP-grasp domain; it reads KLVLAEHDIR…IGDKILDFLF (255 aa). 541-599 provides a ligand contact to ATP; it reads SLFEDKQIVVKPKSTNYGWGISIFKNKFTLEDYQEALNIAFSYDSSVIIEEFIPGDEFR. Positions 721, 738, and 740 each coordinate Mg(2+). Asp721, Glu738, and Asn740 together coordinate Mn(2+).

The protein in the N-terminal section; belongs to the glutamate--cysteine ligase type 1 family. Type 2 subfamily. As to quaternary structure, monomer. Mg(2+) is required as a cofactor. The cofactor is Mn(2+).

It carries out the reaction L-cysteine + L-glutamate + ATP = gamma-L-glutamyl-L-cysteine + ADP + phosphate + H(+). The catalysed reaction is gamma-L-glutamyl-L-cysteine + glycine + ATP = glutathione + ADP + phosphate + H(+). Its pathway is sulfur metabolism; glutathione biosynthesis; glutathione from L-cysteine and L-glutamate: step 1/2. The protein operates within sulfur metabolism; glutathione biosynthesis; glutathione from L-cysteine and L-glutamate: step 2/2. Synthesizes glutathione from L-glutamate and L-cysteine via gamma-L-glutamyl-L-cysteine. The sequence is that of Glutathione biosynthesis bifunctional protein GshAB from Listeria monocytogenes serovar 1/2a (strain ATCC BAA-679 / EGD-e).